The chain runs to 131 residues: Profilin-1 (131 aa).

Belongs to the profilin family. Occurs in many kinds of cells as a complex with monomeric actin in a 1:1 ratio. Cytoplasmic distribution in hypocotyls. In root nodules, it is found in all cells, but is more abundant in the vascular tissue as well as the endodermis.

It localises to the cytoplasm. Its subcellular location is the cytoskeleton. In terms of biological role, binds to actin and affects the structure of the cytoskeleton. At high concentrations, profilin prevents the polymerization of actin, whereas it enhances it at low concentrations. By binding to PIP2, it inhibits the formation of IP3 and DG. The protein is Profilin-1 of Phaseolus vulgaris (Kidney bean).